We begin with the raw amino-acid sequence, 100 residues long: Double-stranded DNA-binding protein (100 aa).

A DNA-binding region spans residues 1–19 (MRKMMQREVTYTTAQLARM).

In terms of assembly, homodimer. Homomultimer. Binds to double-stranded DNA giving rise to multimeric nucleoprotein complexes.

In terms of biological role, histone-like nucleoprotein that binds to the viral dsDNA and responsible for wrapping and condensing the viral DNA about 4-fold. Forms a nucleoprotein complex in which the DNA adopts a right-handed toroidal conformation winding around a protein core. Binding specificity for the viral genome is based on supercoiling. The formation of the nucleoprotein complex at the genome ends, for which the binding affinity is highest, activates the initiation of viral DNA replication. The binding of p6 would recruit the complex formed by the TP and the DNA polymerase to the origin. Protein p6 is also involved in the early to late transcription switch. This Bacillus phage Nf (Bacteriophage Nf) protein is Double-stranded DNA-binding protein.